Consider the following 207-residue polypeptide: Cytochrome c biogenesis ATP-binding export protein CcmA (207 aa).

The ABC transporter domain maps to 4–207 (LEVRELLCER…RISLTQTRAV (204 aa)). Residue 36 to 43 (GSNGAGKT) coordinates ATP.

The protein belongs to the ABC transporter superfamily. CcmA exporter (TC 3.A.1.107) family. As to quaternary structure, the complex is composed of two ATP-binding proteins (CcmA) and two transmembrane proteins (CcmB).

Its subcellular location is the cell inner membrane. The enzyme catalyses heme b(in) + ATP + H2O = heme b(out) + ADP + phosphate + H(+). Its function is as follows. Part of the ABC transporter complex CcmAB involved in the biogenesis of c-type cytochromes; once thought to export heme, this seems not to be the case, but its exact role is uncertain. Responsible for energy coupling to the transport system. This chain is Cytochrome c biogenesis ATP-binding export protein CcmA, found in Shigella dysenteriae serotype 1 (strain Sd197).